Here is a 366-residue protein sequence, read N- to C-terminus: Alanine racemase (366 aa).

Residue Lys40 is the Proton acceptor; specific for D-alanine of the active site. N6-(pyridoxal phosphate)lysine is present on Lys40. A substrate-binding site is contributed by Arg136. Catalysis depends on Tyr263, which acts as the Proton acceptor; specific for L-alanine. Met310 serves as a coordination point for substrate.

It belongs to the alanine racemase family. Requires pyridoxal 5'-phosphate as cofactor.

The enzyme catalyses L-alanine = D-alanine. It participates in amino-acid biosynthesis; D-alanine biosynthesis; D-alanine from L-alanine: step 1/1. Functionally, catalyzes the interconversion of L-alanine and D-alanine. May also act on other amino acids. The chain is Alanine racemase (alr) from Streptococcus pyogenes serotype M2 (strain MGAS10270).